Consider the following 472-residue polypeptide: Phosphoglucosamine mutase (472 aa).

S123 serves as the catalytic Phosphoserine intermediate. 4 residues coordinate Mg(2+): S123, D262, D264, and D266. Position 123 is a phosphoserine (S123).

The protein belongs to the phosphohexose mutase family. Mg(2+) serves as cofactor. Activated by phosphorylation.

The catalysed reaction is alpha-D-glucosamine 1-phosphate = D-glucosamine 6-phosphate. Catalyzes the conversion of glucosamine-6-phosphate to glucosamine-1-phosphate. The protein is Phosphoglucosamine mutase of Synechococcus elongatus (strain ATCC 33912 / PCC 7942 / FACHB-805) (Anacystis nidulans R2).